The chain runs to 365 residues: Histidinol-phosphate aminotransferase (365 aa).

An N6-(pyridoxal phosphate)lysine modification is found at K220.

It belongs to the class-II pyridoxal-phosphate-dependent aminotransferase family. Histidinol-phosphate aminotransferase subfamily. As to quaternary structure, homodimer. The cofactor is pyridoxal 5'-phosphate.

The enzyme catalyses L-histidinol phosphate + 2-oxoglutarate = 3-(imidazol-4-yl)-2-oxopropyl phosphate + L-glutamate. It functions in the pathway amino-acid biosynthesis; L-histidine biosynthesis; L-histidine from 5-phospho-alpha-D-ribose 1-diphosphate: step 7/9. This chain is Histidinol-phosphate aminotransferase (hisC), found in Xylella fastidiosa (strain Temecula1 / ATCC 700964).